Reading from the N-terminus, the 64-residue chain is Translation machinery-associated protein 7 (64 aa).

A disordered region spans residues 1–64; it reads MSGREGGKKK…TGGIKKSGKK (64 aa). Residues 21–50 adopt a coiled-coil conformation; sequence EMDEEDKAFKQKQKEEQKKLEELKAKAAGK. Positions 27–45 are enriched in basic and acidic residues; sequence KAFKQKQKEEQKKLEELKA. Ser-61 carries the post-translational modification ADP-ribosylserine.

It belongs to the TMA7 family.

The polypeptide is Translation machinery-associated protein 7 (TMA7) (Bos taurus (Bovine)).